Consider the following 238-residue polypeptide: Ribosomal RNA large subunit methyltransferase E (238 aa).

5 residues coordinate S-adenosyl-L-methionine: Gly85, Trp87, Asp113, Asp129, and Asp153. Lys193 acts as the Proton acceptor in catalysis.

It belongs to the class I-like SAM-binding methyltransferase superfamily. RNA methyltransferase RlmE family.

It is found in the cytoplasm. It carries out the reaction uridine(2552) in 23S rRNA + S-adenosyl-L-methionine = 2'-O-methyluridine(2552) in 23S rRNA + S-adenosyl-L-homocysteine + H(+). In terms of biological role, specifically methylates the uridine in position 2552 of 23S rRNA at the 2'-O position of the ribose in the fully assembled 50S ribosomal subunit. The polypeptide is Ribosomal RNA large subunit methyltransferase E (Ruegeria sp. (strain TM1040) (Silicibacter sp.)).